A 592-amino-acid chain; its full sequence is Sodium- and chloride-dependent transporter XTRP3A (592 aa).

At 1–7 (MEKARPQ) the chain is on the cytoplasmic side. The chain crosses the membrane as a helical span at residues 8–28 (WGHPLQFVFACISYAVGLGNV). The Extracellular portion of the chain corresponds to 29-42 (WRFPYLCQMYGGGS). The helical transmembrane segment at 43–63 (FLVPYIIMLIVEGMPLLYLEL) threads the bilayer. Residues 64 to 79 (AVGQRMRQGSIGAWRT) lie on the Cytoplasmic side of the membrane. The chain crosses the membrane as a helical span at residues 80-100 (ISPYLSGVGVASVVVSFFLSM). The Extracellular segment spans residues 101 to 165 (YYNVINAWGF…ISPSIQENGG (65 aa)). Residue Asn-131 is glycosylated (N-linked (GlcNAc...) asparagine). A helical transmembrane segment spans residues 166–186 (VQWEPALCLTLAWLMVYLCIL). The Cytoplasmic segment spans residues 187 to 194 (RGTESTGK). A helical transmembrane segment spans residues 195 to 215 (VVYFTASMPYCVLIIYLVRGL). Residues 216–241 (TLHGATNGLMYMFTPKMEQLANPKAW) lie on the Extracellular side of the membrane. The chain crosses the membrane as a helical span at residues 242-262 (INAATQIFFSLGLGFGSLIAF). The Cytoplasmic portion of the chain corresponds to 263–276 (ASYNEPSNNCQKHA). Residues 277–297 (IIVSIINSSTSIFASIVTFSI) traverse the membrane as a helical segment. Residues 298 to 389 (YGFKATFNYE…EAIKNMEVSQ (92 aa)) are Extracellular-facing. A helical membrane pass occupies residues 390-410 (LWSVLYFFMLLMLGIGSMLGN). Residues 411-431 (TAAILTPLTDSKVISSYLPKE) are Cytoplasmic-facing. The helical transmembrane segment at 432-452 (AISGLVCLINCAVGMVFTMEA) threads the bilayer. Residues 453–465 (GNYWFDIFNDYAA) lie on the Extracellular side of the membrane. The chain crosses the membrane as a helical span at residues 466–486 (TLSLLLIVLVETIAVCYVYGL). Over 487-504 (KRFESDLRAMTGRTLSWY) the chain is Cytoplasmic. The helical transmembrane segment at 505-525 (WKVMWAFVSPLLIVGLFIFYL) threads the bilayer. The Extracellular portion of the chain corresponds to 526–554 (SDYILTGTLQYQAWDATQGQLVTKDYPPH). The helical transmembrane segment at 555–575 (ALAVIGLLVASSTMCIPLVAL) threads the bilayer. Residues 576–592 (GTFIRNRLKRGGSAPVA) lie on the Cytoplasmic side of the membrane.

It belongs to the sodium:neurotransmitter symporter (SNF) (TC 2.A.22) family. SLC6A20 subfamily. Expressed in brain, kidney, small intestine, thymus, spleen and lung. In the brain, expressed in cerebellum, cortex and brain stem. Not detected in liver, muscle or heart. In brain, widespread in various regions, including the meninges, choroid plexus, cortex, hippocampus and thalamus.

The protein localises to the apical cell membrane. It catalyses the reaction L-proline(out) + chloride(out) + 2 Na(+)(out) = L-proline(in) + chloride(in) + 2 Na(+)(in). The enzyme catalyses 4-hydroxy-L-proline(out) + chloride(out) + 2 Na(+)(out) = 4-hydroxy-L-proline(in) + chloride(in) + 2 Na(+)(in). The catalysed reaction is 2-methyl-2-(methylamino)propanoate(out) + chloride(out) + 2 Na(+)(out) = 2-methyl-2-(methylamino)propanoate(in) + chloride(in) + 2 Na(+)(in). It carries out the reaction L-pipecolate(out) + chloride(out) + 2 Na(+)(out) = L-pipecolate(in) + chloride(in) + 2 Na(+)(in). It catalyses the reaction glycine betaine(out) + chloride(out) + 2 Na(+)(out) = glycine betaine(in) + chloride(in) + 2 Na(+)(in). The enzyme catalyses glycine(out) + chloride(out) + 2 Na(+)(out) = glycine(in) + chloride(in) + 2 Na(+)(in). In terms of biological role, mediates the Na(+)- and Cl(-)-dependent uptake of imino acids such as L-proline, N-methyl-L-proline and pipecolate as well as N-methylated amino acids. Also transports glycine, regulates proline and glycine homeostasis in the brain playing a role in the modulation of NMDAR currents. The sequence is that of Sodium- and chloride-dependent transporter XTRP3A from Mus musculus (Mouse).